A 484-amino-acid polypeptide reads, in one-letter code: Probable glycine dehydrogenase (decarboxylating) subunit 2 (484 aa).

An N6-(pyridoxal phosphate)lysine modification is found at Lys264.

Belongs to the GcvP family. C-terminal subunit subfamily. As to quaternary structure, the glycine cleavage system is composed of four proteins: P, T, L and H. In this organism, the P 'protein' is a heterodimer of two subunits. Pyridoxal 5'-phosphate is required as a cofactor.

The enzyme catalyses N(6)-[(R)-lipoyl]-L-lysyl-[glycine-cleavage complex H protein] + glycine + H(+) = N(6)-[(R)-S(8)-aminomethyldihydrolipoyl]-L-lysyl-[glycine-cleavage complex H protein] + CO2. In terms of biological role, the glycine cleavage system catalyzes the degradation of glycine. The P protein binds the alpha-amino group of glycine through its pyridoxal phosphate cofactor; CO(2) is released and the remaining methylamine moiety is then transferred to the lipoamide cofactor of the H protein. This Legionella pneumophila (strain Paris) protein is Probable glycine dehydrogenase (decarboxylating) subunit 2.